Consider the following 246-residue polypeptide: NAD-dependent protein deacylase (246 aa).

Positions 1-246 (MDLSQARAAL…RGLELLLEDD (246 aa)) constitute a Deacetylase sirtuin-type domain. 21–41 (GAGISAESGIPTFRDAQTGHW) provides a ligand contact to NAD(+). Tyr66 and Arg69 together coordinate substrate. 101 to 104 (QNVD) contacts NAD(+). His123 functions as the Proton acceptor in the catalytic mechanism. NAD(+)-binding positions include 191 to 193 (GTS), 217 to 219 (NPE), and Ala235.

Belongs to the sirtuin family. Class III subfamily.

It localises to the cytoplasm. The enzyme catalyses N(6)-acetyl-L-lysyl-[protein] + NAD(+) + H2O = 2''-O-acetyl-ADP-D-ribose + nicotinamide + L-lysyl-[protein]. It carries out the reaction N(6)-succinyl-L-lysyl-[protein] + NAD(+) + H2O = 2''-O-succinyl-ADP-D-ribose + nicotinamide + L-lysyl-[protein]. Functionally, NAD-dependent lysine deacetylase and desuccinylase that specifically removes acetyl and succinyl groups on target proteins. Modulates the activities of several proteins which are inactive in their acylated form. This is NAD-dependent protein deacylase from Deinococcus radiodurans (strain ATCC 13939 / DSM 20539 / JCM 16871 / CCUG 27074 / LMG 4051 / NBRC 15346 / NCIMB 9279 / VKM B-1422 / R1).